A 175-amino-acid polypeptide reads, in one-letter code: ADP-ribosylation factor 6 (175 aa).

The N-myristoyl glycine moiety is linked to residue Gly2. GTP is bound by residues 20 to 27 (GLDAAGKT), 63 to 67 (DVGGQ), and 122 to 125 (NKQD).

It belongs to the small GTPase superfamily. Arf family. Expressed in the head (at protein level).

The protein localises to the golgi apparatus. With respect to regulation, activation is generally mediated by a guanine exchange factor (GEF), while inactivation through hydrolysis of bound GTP is catalyzed by a GTPase activating protein (GAP). May be activated by Efa6. GTP-binding protein involved in protein trafficking; may modulate vesicle budding and uncoating within the Golgi apparatus. Promotes cell movement and remodeling of the actin cytoskeleton during compound eye morphogenesis. Required for normal ethanol-induced tolerance and preference. Probably after Efa6-mediated activation, counteracts ethanol-induced sedation. The polypeptide is ADP-ribosylation factor 6 (Drosophila melanogaster (Fruit fly)).